Consider the following 97-residue polypeptide: UPF0416 protein RC0826 (97 aa).

Positions 1–33 (MRIFVKAAISTAAWRFYAHPTVAMGICVGTALA) are cleaved as a signal peptide.

The protein belongs to the UPF0416 family.

This chain is UPF0416 protein RC0826, found in Rickettsia conorii (strain ATCC VR-613 / Malish 7).